A 447-amino-acid polypeptide reads, in one-letter code: Signal recognition particle 54 kDa protein (447 aa).

Residues 103–110, 185–189, and 245–248 contribute to the GTP site; these read GVQGSGKT, DTAGR, and TKMD.

This sequence belongs to the GTP-binding SRP family. SRP54 subfamily. In terms of assembly, part of the signal recognition particle protein translocation system, which is composed of SRP and FtsY. Archaeal SRP consists of a 7S RNA molecule of 300 nucleotides and two protein subunits: SRP54 and SRP19.

It localises to the cytoplasm. It catalyses the reaction GTP + H2O = GDP + phosphate + H(+). Its function is as follows. Involved in targeting and insertion of nascent membrane proteins into the cytoplasmic membrane. Binds to the hydrophobic signal sequence of the ribosome-nascent chain (RNC) as it emerges from the ribosomes. The SRP-RNC complex is then targeted to the cytoplasmic membrane where it interacts with the SRP receptor FtsY. This is Signal recognition particle 54 kDa protein from Saccharolobus islandicus (strain M.16.27) (Sulfolobus islandicus).